The primary structure comprises 141 residues: Transcription antitermination protein NusB (141 aa).

The protein belongs to the NusB family.

Functionally, involved in transcription antitermination. Required for transcription of ribosomal RNA (rRNA) genes. Binds specifically to the boxA antiterminator sequence of the ribosomal RNA (rrn) operons. This is Transcription antitermination protein NusB from Fervidobacterium nodosum (strain ATCC 35602 / DSM 5306 / Rt17-B1).